A 622-amino-acid chain; its full sequence is DNA mismatch repair protein MutL (622 aa).

Belongs to the DNA mismatch repair MutL/HexB family.

Functionally, this protein is involved in the repair of mismatches in DNA. It is required for dam-dependent methyl-directed DNA mismatch repair. May act as a 'molecular matchmaker', a protein that promotes the formation of a stable complex between two or more DNA-binding proteins in an ATP-dependent manner without itself being part of a final effector complex. This Actinobacillus pleuropneumoniae serotype 3 (strain JL03) protein is DNA mismatch repair protein MutL.